A 304-amino-acid chain; its full sequence is Sulfate adenylyltransferase subunit 2 (304 aa).

It belongs to the PAPS reductase family. CysD subfamily. In terms of assembly, heterodimer composed of CysD, the smaller subunit, and CysNC.

It catalyses the reaction sulfate + ATP + H(+) = adenosine 5'-phosphosulfate + diphosphate. The protein operates within sulfur metabolism; hydrogen sulfide biosynthesis; sulfite from sulfate: step 1/3. With CysN forms the ATP sulfurylase (ATPS) that catalyzes the adenylation of sulfate producing adenosine 5'-phosphosulfate (APS) and diphosphate, the first enzymatic step in sulfur assimilation pathway. APS synthesis involves the formation of a high-energy phosphoric-sulfuric acid anhydride bond driven by GTP hydrolysis by CysN coupled to ATP hydrolysis by CysD. The sequence is that of Sulfate adenylyltransferase subunit 2 from Xylella fastidiosa (strain 9a5c).